Here is a 59-residue protein sequence, read N- to C-terminus: MKTMKVTQIKSGAHRLKSHKACLMGLGLRRIGHTVEVEDTPSTRGMVNRINYMVKVEEA.

The protein belongs to the universal ribosomal protein uL30 family. Part of the 50S ribosomal subunit.

The sequence is that of Large ribosomal subunit protein uL30 from Psychrobacter sp. (strain PRwf-1).